A 255-amino-acid polypeptide reads, in one-letter code: Small ribosomal subunit protein eS1 (255 aa).

Ala-2 carries the post-translational modification N-acetylalanine; partial.

It belongs to the eukaryotic ribosomal protein eS1 family. Component of the small ribosomal subunit. Mature ribosomes consist of a small (40S) and a large (60S) subunit. The 40S subunit contains about 33 different proteins and 1 molecule of RNA (18S). The 60S subunit contains about 49 different proteins and 3 molecules of RNA (25S, 5.8S and 5S).

The protein resides in the cytoplasm. The chain is Small ribosomal subunit protein eS1 from Vanderwaltozyma polyspora (strain ATCC 22028 / DSM 70294 / BCRC 21397 / CBS 2163 / NBRC 10782 / NRRL Y-8283 / UCD 57-17) (Kluyveromyces polysporus).